A 323-amino-acid chain; its full sequence is Methenyltetrahydromethanopterin cyclohydrolase (323 aa).

It belongs to the MCH family. As to quaternary structure, homodimer.

It is found in the cytoplasm. It carries out the reaction 5,10-methenyl-5,6,7,8-tetrahydromethanopterin + H2O = N(5)-formyl-5,6,7,8-tetrahydromethanopterin + H(+). It participates in one-carbon metabolism; formaldehyde degradation; formate from formaldehyde (H(4)MPT route): step 3/5. Functionally, catalyzes the hydrolysis of methenyl-H(4)MPT(+) to 5-formyl-H(4)MPT. This Methylorubrum extorquens (strain ATCC 14718 / DSM 1338 / JCM 2805 / NCIMB 9133 / AM1) (Methylobacterium extorquens) protein is Methenyltetrahydromethanopterin cyclohydrolase (mch).